The chain runs to 658 residues: Carnitine O-palmitoyltransferase 2, mitochondrial (658 aa).

Residues 1-26 constitute a mitochondrion transit peptide; it reads MARLLTSSSALRWGAVSSSQSVGRAY. At 27–179 the chain is on the mitochondrial matrix side; it reads SSGSPDTEYV…GYLEPEIFHL (153 aa). Residues 180-209 constitute an intramembrane region (note=Mitochondrial inner membrane); the sequence is NPAKSDTLTFRKLIRFVPSSLSWYGAYMVN. The Mitochondrial matrix segment spans residues 210 to 658; sequence AYPLDMSQYF…FTVLQDKPIK (449 aa). The active-site Proton acceptor is the His373. CoA is bound at residue 453-465; the sequence is GKELLKTQKLSPD. 3 residues coordinate (R)-carnitine: Tyr487, Ser489, and Thr500.

This sequence belongs to the carnitine/choline acetyltransferase family.

The protein localises to the mitochondrion inner membrane. The catalysed reaction is (R)-carnitine + hexadecanoyl-CoA = O-hexadecanoyl-(R)-carnitine + CoA. It catalyses the reaction octanoyl-CoA + (R)-carnitine = O-octanoyl-(R)-carnitine + CoA. The enzyme catalyses decanoyl-CoA + (R)-carnitine = O-decanoyl-(R)-carnitine + CoA. It carries out the reaction dodecanoyl-CoA + (R)-carnitine = O-dodecanoyl-R-carnitine + CoA. The catalysed reaction is tetradecanoyl-CoA + (R)-carnitine = O-tetradecanoyl-(R)-carnitine + CoA. It catalyses the reaction (R)-carnitine + octadecanoyl-CoA = O-octadecanoyl-(R)-carnitine + CoA. The enzyme catalyses eicosanoyl-CoA + (R)-carnitine = O-eicosanoyl-(R)-carnitine + CoA. It carries out the reaction (9Z)-tetradecenoyl-CoA + (R)-carnitine = O-(9Z)-tetradecenoyl-(R)-carnitine + CoA. The catalysed reaction is (5Z)-tetradecenoyl-CoA + (R)-carnitine = O-(5Z)-tetradecenoyl-(R)-carnitine + CoA. It catalyses the reaction (R)-carnitine + (9Z)-octadecenoyl-CoA = O-(9Z)-octadecenoyl-(R)-carnitine + CoA. The enzyme catalyses 4,8-dimethylnonanoyl-CoA + (R)-carnitine = O-4,8-dimethylnonanoyl-(R)-carnitine + CoA. It functions in the pathway lipid metabolism; fatty acid beta-oxidation. Functionally, involved in the intramitochondrial synthesis of acylcarnitines from accumulated acyl-CoA metabolites. Reconverts acylcarnitines back into the respective acyl-CoA esters that can then undergo beta-oxidation, an essential step for the mitochondrial uptake of long-chain fatty acids and their subsequent beta-oxidation in the mitochondrion. Active with medium (C8-C12) and long-chain (C14-C18) acyl-CoA esters. In Xenopus tropicalis (Western clawed frog), this protein is Carnitine O-palmitoyltransferase 2, mitochondrial (cpt2).